Here is a 213-residue protein sequence, read N- to C-terminus: Uracil phosphoribosyltransferase (213 aa).

5-phospho-alpha-D-ribose 1-diphosphate is bound by residues Arg77, Arg102, and 129 to 137 (DPMLATGGS). Uracil is bound by residues Ile198 and 203 to 205 (GDA). Asp204 contacts 5-phospho-alpha-D-ribose 1-diphosphate.

The protein belongs to the UPRTase family. It depends on Mg(2+) as a cofactor.

It carries out the reaction UMP + diphosphate = 5-phospho-alpha-D-ribose 1-diphosphate + uracil. It participates in pyrimidine metabolism; UMP biosynthesis via salvage pathway; UMP from uracil: step 1/1. With respect to regulation, allosterically activated by GTP. Functionally, catalyzes the conversion of uracil and 5-phospho-alpha-D-ribose 1-diphosphate (PRPP) to UMP and diphosphate. The sequence is that of Uracil phosphoribosyltransferase from Mycobacteroides abscessus (strain ATCC 19977 / DSM 44196 / CCUG 20993 / CIP 104536 / JCM 13569 / NCTC 13031 / TMC 1543 / L948) (Mycobacterium abscessus).